The chain runs to 378 residues: Alpha-(1,3)-fucosyltransferase fut-5 (378 aa).

The Cytoplasmic portion of the chain corresponds to 1–7; sequence MKHNTLR. The helical; Signal-anchor for type II membrane protein transmembrane segment at 8–28 threads the bilayer; the sequence is AVFQFSFFIGICTFIMIAGYS. At 29 to 378 the chain is on the lumenal side; that stretch reads YQINYNQRMG…CDNSFATRFL (350 aa). Residues asparagine 44, asparagine 88, asparagine 105, asparagine 143, asparagine 171, and asparagine 307 are each glycosylated (N-linked (GlcNAc...) asparagine).

The protein belongs to the glycosyltransferase 10 family. Ca(2+) serves as cofactor. In terms of processing, N-glycosylated.

It is found in the golgi apparatus. The protein localises to the golgi stack membrane. The catalysed reaction is a beta-D-galactosyl-(1-&gt;3)-N-acetyl-beta-D-glucosaminyl derivative + GDP-beta-L-fucose = a beta-D-galactosyl-(1-&gt;3)-[alpha-L-fucosyl-(1-&gt;4)]-N-acetyl-beta-D-glucosaminyl derivative + GDP + H(+). Its pathway is protein modification; protein glycosylation. With respect to regulation, inhibited by Cu(2+) and Ni(2+), and to a lesser extent by EDTA, Mn(2+) and Mg(2+). Catalyzes the addition of fucose in alpha 1-3 linkage to GalNAc-beta-1-&gt;4-GlcNAc-beta-1-&gt;3-Gal-beta-1-&gt;4-Glc (LDNT)acceptor. Unlike fut-1, does not add fucose to Man-alpha-1-&gt;3-(Man-alpha-1-&gt;6)-Man-beta-1-&gt;4-GlcNAc-beta-1-&gt;4-GlcNAc-beta-1-Asn (M3), Man-alpha-1-&gt;3-(Man-alpha-1-&gt;6)-Man-beta-1-&gt;4-GlcNAc-beta-1-&gt;4-(Fuc-alpha-1-&gt;6)-GlcNAc-beta-1-Asn (M3F6) or GlcNAc-beta-1-&gt;2-Man-alpha-1-&gt;3-(GlcNAc-beta-1-&gt;2-Man-alpha-1-&gt;6)-Man-beta-1-4-GlcNAc-beta-1-&gt;4-(Fuc-alpha-1-&gt;6)-GlcNAc-beta-1-Asn (GnM3F6) acceptors. The polypeptide is Alpha-(1,3)-fucosyltransferase fut-5 (Caenorhabditis elegans).